Reading from the N-terminus, the 316-residue chain is Aprataxin (316 aa).

Positions 1–38 constitute an FHA-like domain; it reads HASARGEGFLLLKADCNKGYVTVKQIGVNPTSVDLVDV. Positions 104 to 142 are disordered; the sequence is KKMEVVDTQSSSADLRPSKSSVSPHEGTTSRKEHLGHWS. Positions 110-130 are enriched in polar residues; sequence DTQSSSADLRPSKSSVSPHEG. Positions 142–247 constitute an HIT domain; the sequence is SQGLKSSMQD…ISQDFDSPAL (106 aa). Interaction with DNA substrate regions lie at residues 167–171 and 229–230; these read DKYPK and SM. The Histidine triad motif motif lies at 232–236; sequence QLHLH. H234 functions as the Tele-AMP-histidine intermediate in the catalytic mechanism. The C2H2-type zinc finger occupies 291-313; it reads LRCHLCKQQLSTIPQLKEHLKKH.

Its subcellular location is the nucleus. The protein resides in the nucleoplasm. The protein localises to the nucleolus. The enzyme catalyses a 5'-end adenosine-5'-diphospho-5'-2'-deoxyribonucleoside-DNA + H2O = a 5'-end 5'-phospho-2'-deoxyribonucleoside-DNA + AMP + 2 H(+). It carries out the reaction a 5'-end adenosine-5'-diphospho-5'-ribonucleoside-2'-deoxyribonucleotide-DNA + H2O = a 5'-end 5'-phospho-ribonucleoside-2'-deoxyribonucleotide-DNA + AMP + 2 H(+). It catalyses the reaction a 3'-end 2'-deoxyribonucleotide-3'-diphospho-5'-guanosine-DNA + H2O = a 3'-end 2'-deoxyribonucleotide 3'-phosphate-DNA + GMP + 2 H(+). DNA-binding protein involved in single-strand DNA break repair, double-strand DNA break repair and base excision repair. Resolves abortive DNA ligation intermediates formed either at base excision sites, or when DNA ligases attempt to repair non-ligatable breaks induced by reactive oxygen species. Catalyzes the release of adenylate groups covalently linked to 5'-phosphate termini, resulting in the production of 5'-phosphate termini that can be efficiently rejoined. Also able to hydrolyze adenosine 5'-monophosphoramidate (AMP-NH(2)) and diadenosine tetraphosphate (AppppA), but with lower catalytic activity. Likewise, catalyzes the release of 3'-linked guanosine (DNAppG) and inosine (DNAppI) from DNA, but has higher specific activity with 5'-linked adenosine (AppDNA). In Gallus gallus (Chicken), this protein is Aprataxin (APTX).